We begin with the raw amino-acid sequence, 550 residues long: Zorya protein ZorA (550 aa).

3 consecutive transmembrane segments (helical) span residues 16 to 36 (TLITNIFIWAVIFVFLSAWWC), 52 to 72 (LMGALGILGTFIGIIIGLLNF), and 92 to 112 (FITSIVGMFFAILFNGMDAFF).

The protein belongs to the MotA family.

The protein localises to the cell inner membrane. Component of antiviral defense system Zorya type II, composed of ZorA, ZorB and ZorE. Expression of Zorya type II in E.coli (strain MG1655) confers resistance to phages SECphi7 and T7. While most T7 infected Zorya-containing cells undergo abortive infection, a minority produce viable phage progeny. These eventually accumulate to a high multiplicity of infection, leading to culture collapse by 170 minutes after initial infection. ZorA and ZorB probably assemble in the cell inner membrane and exert their effect there. The polypeptide is Zorya protein ZorA (Escherichia coli (strain ATCC 8739 / DSM 1576 / NBRC 3972 / NCIMB 8545 / WDCM 00012 / Crooks)).